A 141-amino-acid chain; its full sequence is Putative pre-16S rRNA nuclease (141 aa).

The protein belongs to the YqgF nuclease family.

The protein resides in the cytoplasm. Could be a nuclease involved in processing of the 5'-end of pre-16S rRNA. The chain is Putative pre-16S rRNA nuclease from Roseiflexus sp. (strain RS-1).